Reading from the N-terminus, the 189-residue chain is Xanthine phosphoribosyltransferase (189 aa).

Xanthine is bound by residues L20 and N27. Position 127-131 (127-131 (AYGNA)) interacts with 5-phospho-alpha-D-ribose 1-diphosphate. K155 contacts xanthine.

This sequence belongs to the purine/pyrimidine phosphoribosyltransferase family. Xpt subfamily. In terms of assembly, homodimer.

It localises to the cytoplasm. It catalyses the reaction XMP + diphosphate = xanthine + 5-phospho-alpha-D-ribose 1-diphosphate. The protein operates within purine metabolism; XMP biosynthesis via salvage pathway; XMP from xanthine: step 1/1. Its function is as follows. Converts the preformed base xanthine, a product of nucleic acid breakdown, to xanthosine 5'-monophosphate (XMP), so it can be reused for RNA or DNA synthesis. This chain is Xanthine phosphoribosyltransferase, found in Bacteroides fragilis (strain ATCC 25285 / DSM 2151 / CCUG 4856 / JCM 11019 / LMG 10263 / NCTC 9343 / Onslow / VPI 2553 / EN-2).